We begin with the raw amino-acid sequence, 157 residues long: Transcriptional regulator MraZ (157 aa).

SpoVT-AbrB domains lie at Thr-7–Leu-54 and Thr-83–Arg-126.

This sequence belongs to the MraZ family. In terms of assembly, forms oligomers.

It is found in the cytoplasm. The protein resides in the nucleoid. The sequence is that of Transcriptional regulator MraZ from Azorhizobium caulinodans (strain ATCC 43989 / DSM 5975 / JCM 20966 / LMG 6465 / NBRC 14845 / NCIMB 13405 / ORS 571).